We begin with the raw amino-acid sequence, 695 residues long: GRB2-associated-binding protein 1 (695 aa).

S2 is modified (N-acetylserine). The PH domain maps to 5–116; it reads EVVCSGWLRK…WVRCICDICG (112 aa). The tract at residues 204–229 is disordered; sequence AKPTFSETDCNDNVPSHQTPASSQSK. Over residues 206 to 229 the composition is skewed to polar residues; the sequence is PTFSETDCNDNVPSHQTPASSQSK. A phosphoserine mark is found at S251, S253, S266, and S304. A disordered region spans residues 306-387; that stretch reads SYDIPPTPGN…PAGMTPSRSN (82 aa). A compositionally biased stretch (polar residues) spans 314 to 334; the sequence is GNTYQIPRTFPESTLGQSSKL. A Phosphothreonine modification is found at T388. A phosphoserine mark is found at S403 and S455. Residues 453 to 659 are disordered; sequence PNSPPRQHSG…GSSMADERVD (207 aa). Polar residues-rich tracts occupy residues 457 to 466 and 605 to 617; these read PRQHSGSFTE and FASNSLDGGSSPM. Y628 bears the Phosphotyrosine mark. T639 carries the post-translational modification Phosphothreonine. S652 bears the Phosphoserine mark. Y660 carries the phosphotyrosine modification. The tract at residues 671–695 is disordered; it reads LKSTREAWTDGRQSTESETPTKNVK. Basic and acidic residues predominate over residues 673–685; that stretch reads STREAWTDGRQST. S684 carries the post-translational modification Phosphoserine. The segment covering 686-695 has biased composition (polar residues); sequence ESETPTKNVK.

This sequence belongs to the GAB family. Identified in a complex containing FRS2, GRB2, GAB1, PIK3R1 and SOS1. Forms a tripartite complex containing GAB1, METTL13 and SPRY2. Within the complex interacts with METTL13. Interacts with GRB2 and with other SH2-containing proteins. Interacts with phosphorylated LAT2. Interacts with PTPRJ. Interacts (phosphorylated) with PTPN11. Interacts with HCK. Post-translationally, phosphorylated on tyrosine residue(s) by the epidermal growth factor receptor (EGFR) and the insulin receptor (INSR). Tyrosine phosphorylation of GAB1 mediates interaction with several proteins that contain SH2 domains. Phosphorylated on tyrosine residues by HCK upon IL6 signaling. Phosphorylated in response to FGFR1 activation. As to expression, expressed in the inner ear (at protein level). Expression is detected in the cochlear duct, spiral limbus region, efferent and afferent nerves, and in spiral ganglion neurons (at protein level).

Its function is as follows. Adapter protein that plays a role in intracellular signaling cascades triggered by activated receptor-type kinases. Plays a role in FGFR1 signaling. Probably involved in signaling by the epidermal growth factor receptor (EGFR) and the insulin receptor (INSR). Involved in the MET/HGF-signaling pathway. The sequence is that of GRB2-associated-binding protein 1 (Gab1) from Mus musculus (Mouse).